A 438-amino-acid chain; its full sequence is MPKLSFSDFNDYDNKLKCYLQNKGIEKEFTECKLHGIMNMVDKFNLYNLKDVEQLSFVMWKLRKYFVKLLHNGYLLTRVNFDMFEKKILEYNSTTRVVRHRGMTPLGGLEVDIDPKIFYLDCIKFIGQFTNQQEIYDKCLNILENSQKKLSDNYLPSRIMYLMRYNEYVNVNHNKVTENIFHMNKLSNFYHNVFTITPSQEEQYERYKFEIMEVYHDIARFKSSRYSGQANRIGYVCLTDIMVKNHYHVIDDTDKISYHTKMFRSTTLDSIISKILCEISDQIILPDEELAARKTARKIEKKMNNDLRFISKNDKVEILDVFSNAFICVKDIKYDVEILKRDMLIQLYERGIVDPNSDITYDLMRNAAENGVLWIVKFLVEKGCPVRNLPPSGNGKKQLHEILTEPVLDDLGFGKKWVAKQTETRINLLNYLIDNHYI.

This is an uncharacterized protein from Acanthamoeba polyphaga mimivirus (APMV).